The primary structure comprises 275 residues: Reticulon-like protein B1 (275 aa).

2 stretches are compositionally biased toward basic and acidic residues: residues 1–10 (MAEEHKHDES) and 20–38 (VVER…HHGG). Positions 1–68 (MAEEHKHDES…PSSPSSSMKS (68 aa)) are disordered. A2 is subject to N-acetylalanine. Positions 59 to 68 (PSSPSSSMKS) are enriched in low complexity. In terms of domain architecture, Reticulon spans 89 to 274 (PADIFMWKNK…PLGPLKNKKK (186 aa)). 3 helical membrane-spanning segments follow: residues 99–119 (KMSG…ELME), 120–140 (YHLL…LFLW), and 194–214 (FLIA…FNFL).

Interacts with VirB2. As to expression, predominantly expressed in root tissues.

Its subcellular location is the endoplasmic reticulum membrane. It localises to the cell membrane. Plays a role in the Agrobacterium-mediated plant transformation via its interaction with VirB2, the major component of the T-pilus. This is Reticulon-like protein B1 (RTNLB1) from Arabidopsis thaliana (Mouse-ear cress).